The sequence spans 384 residues: Queuine tRNA-ribosyltransferase (384 aa).

Catalysis depends on Asp92, which acts as the Proton acceptor. Residues 92–96, Asp146, Gln192, and Gly219 each bind substrate; that span reads DSGGF. Positions 250 to 256 are RNA binding; that stretch reads GVGTPAE. Catalysis depends on Asp269, which acts as the Nucleophile. The interval 274-278 is RNA binding; important for wobble base 34 recognition; it reads TRNAR. Zn(2+) is bound by residues Cys307, Cys309, Cys312, and His338.

This sequence belongs to the queuine tRNA-ribosyltransferase family. As to quaternary structure, homodimer. Within each dimer, one monomer is responsible for RNA recognition and catalysis, while the other monomer binds to the replacement base PreQ1. The cofactor is Zn(2+).

It catalyses the reaction 7-aminomethyl-7-carbaguanine + guanosine(34) in tRNA = 7-aminomethyl-7-carbaguanosine(34) in tRNA + guanine. It participates in tRNA modification; tRNA-queuosine biosynthesis. Functionally, catalyzes the base-exchange of a guanine (G) residue with the queuine precursor 7-aminomethyl-7-deazaguanine (PreQ1) at position 34 (anticodon wobble position) in tRNAs with GU(N) anticodons (tRNA-Asp, -Asn, -His and -Tyr). Catalysis occurs through a double-displacement mechanism. The nucleophile active site attacks the C1' of nucleotide 34 to detach the guanine base from the RNA, forming a covalent enzyme-RNA intermediate. The proton acceptor active site deprotonates the incoming PreQ1, allowing a nucleophilic attack on the C1' of the ribose to form the product. After dissociation, two additional enzymatic reactions on the tRNA convert PreQ1 to queuine (Q), resulting in the hypermodified nucleoside queuosine (7-(((4,5-cis-dihydroxy-2-cyclopenten-1-yl)amino)methyl)-7-deazaguanosine). This is Queuine tRNA-ribosyltransferase from Desulfosudis oleivorans (strain DSM 6200 / JCM 39069 / Hxd3) (Desulfococcus oleovorans).